A 138-amino-acid polypeptide reads, in one-letter code: Protein NrdI (138 aa).

It belongs to the NrdI family.

Probably involved in ribonucleotide reductase function. The polypeptide is Protein NrdI (Paracoccus denitrificans (strain Pd 1222)).